Consider the following 365-residue polypeptide: Flagellar P-ring protein 2 (365 aa).

Positions 1–19 (MKKWIVMASLLLAALPAMS) are cleaved as a signal peptide.

The protein belongs to the FlgI family. In terms of assembly, the basal body constitutes a major portion of the flagellar organelle and consists of four rings (L,P,S, and M) mounted on a central rod.

It localises to the periplasm. It is found in the bacterial flagellum basal body. In terms of biological role, assembles around the rod to form the L-ring and probably protects the motor/basal body from shearing forces during rotation. This is Flagellar P-ring protein 2 from Chromobacterium violaceum (strain ATCC 12472 / DSM 30191 / JCM 1249 / CCUG 213 / NBRC 12614 / NCIMB 9131 / NCTC 9757 / MK).